The sequence spans 256 residues: MPRDNMASLIQRIARQACLTFRGSSTGSEGPAPGFPENLSLLKSLLTQVRAEDLNIAPRKALPQPLPRNLPPVTYMHIYETEGFSLGVFLLKSGTCIPLHDHPGMHGMLKVLYGTVRISCMDKLDTGAGHRRPPPEQQFEPPLQPLEREAVRPGVLRSRAEYTEASGPCVLTPHRDNLHQIDAVDGPAAFLDILAPPYDPEDGRDCHYYRVVEPIRPKEASGSACDLPREVWLLETPQADDFWCEGEPYPGPKVLP.

3 residues coordinate Fe cation: H100, H102, and H179.

In terms of assembly, monomer. It depends on Fe cation as a cofactor. As to expression, ubiquitous, with highest expression in brain, heart and skeletal muscle (at protein level).

The enzyme catalyses cysteamine + O2 = hypotaurine + H(+). It catalyses the reaction N-terminal L-cysteinyl-[protein] + O2 = N-terminal S-hydroxy-S-oxy-L-cysteinyl-[protein] + H(+). Plays a vital role in regulating thiol metabolism and preserving oxygen homeostasis by oxidizing the sulfur of cysteamine and N-terminal cysteine-containing proteins to their corresponding sulfinic acids using O2 as a cosubstrate. Catalyzes the oxidation of cysteamine (2-aminoethanethiol) to hypotaurine. Catalyzes the oxidation of the regulator of G-protein signaling 5 (RGS5). Also oxidizes proteins RGS4 and interleukin-32 (IL32). In Mus musculus (Mouse), this protein is 2-aminoethanethiol dioxygenase (Ado).